A 188-amino-acid chain; its full sequence is ATP synthase subunit delta (188 aa).

It belongs to the ATPase delta chain family. In terms of assembly, F-type ATPases have 2 components, F(1) - the catalytic core - and F(0) - the membrane proton channel. F(1) has five subunits: alpha(3), beta(3), gamma(1), delta(1), epsilon(1). F(0) has three main subunits: a(1), b(2) and c(10-14). The alpha and beta chains form an alternating ring which encloses part of the gamma chain. F(1) is attached to F(0) by a central stalk formed by the gamma and epsilon chains, while a peripheral stalk is formed by the delta and b chains.

It is found in the cell membrane. In terms of biological role, f(1)F(0) ATP synthase produces ATP from ADP in the presence of a proton or sodium gradient. F-type ATPases consist of two structural domains, F(1) containing the extramembraneous catalytic core and F(0) containing the membrane proton channel, linked together by a central stalk and a peripheral stalk. During catalysis, ATP synthesis in the catalytic domain of F(1) is coupled via a rotary mechanism of the central stalk subunits to proton translocation. Its function is as follows. This protein is part of the stalk that links CF(0) to CF(1). It either transmits conformational changes from CF(0) to CF(1) or is implicated in proton conduction. In Malacoplasma penetrans (strain HF-2) (Mycoplasma penetrans), this protein is ATP synthase subunit delta.